A 65-amino-acid chain; its full sequence is Large ribosomal subunit protein bL28 (65 aa).

The segment at 1-21 (MPGRDQLTGQKALSGNKRSHA) is disordered.

It belongs to the bacterial ribosomal protein bL28 family.

This Metamycoplasma arthritidis (strain 158L3-1) (Mycoplasma arthritidis) protein is Large ribosomal subunit protein bL28.